Consider the following 125-residue polypeptide: MAVCIIDHGNIRGVIYFEPVHGKDKVLGSVIGLKSGTYSLIIHRYGDISRGCESIGSPEIFIGNIFVNRYGVAYVYLDTDVNISTIIGKALSISKNDQRLACGVIGISFINEKIIHFLTINENGV.

The cysteines at positions 52 and 102 are disulfide-linked.

The protein belongs to the Cu-Zn superoxide dismutase family.

It is found in the virion. The protein localises to the host cytoplasm. Superoxide dismutase-like protein with no enzymatic activity. In Cowpox virus (strain Brighton Red) (CPV), this protein is Cu-Zn superoxide dismutase-like protein OPG175 (OPG175).